Here is a 374-residue protein sequence, read N- to C-terminus: Alcohol dehydrogenase 1 (374 aa).

Position 1 is an N-acetylserine (S1). Zn(2+) contacts are provided by C46, H67, C97, C100, C103, C111, and C174. Residues 199 to 204 (GLGGVG), D223, K228, 292 to 294 (VGV), and R369 each bind NAD(+).

Belongs to the zinc-containing alcohol dehydrogenase family. Class-I subfamily. In terms of assembly, homodimer. Requires Zn(2+) as cofactor.

It is found in the cytoplasm. The enzyme catalyses a primary alcohol + NAD(+) = an aldehyde + NADH + H(+). It catalyses the reaction a secondary alcohol + NAD(+) = a ketone + NADH + H(+). The polypeptide is Alcohol dehydrogenase 1 (ADH1) (Struthio camelus (Common ostrich)).